The sequence spans 423 residues: F-box/LRR-repeat protein 2 (423 aa).

The F-box domain occupies 9 to 55 (GLINKKLPKELLLRIFSFLDIVTLCRCAQISKAWNILALDGSNWQRI). LRR repeat units follow at residues 61–87 (QTDVEGRVVENISKRCGGFLRKLSLRG), 88–113 (CIGVGDSSLKTFAQNCRNIEHLNLNG), 114–139 (CTKITDSTCYSLSRFCSKLKHLDLTS), 140–165 (CVSITNSSLKGISEGCRNLEYLNLSW), 166–191 (CDQITKDGIEALVRGCRGLKALLLRG), 192–217 (CTQLEDEALKHIQNYCHELVSLNLQS), 218–243 (CSRITDEGVVQICRGCHRLQALCLSG), 244–269 (CSNLTDASLTALGLNCPRLQILEAAR), 270–295 (CSHLTDAGFTLLARNCHELEKMDLEE), 296–321 (CILITDSTLIQLSIHCPKLQALSLSH), 322–350 (CELITDDGILHLSNSTCGHERLRVLELDN), 351–375 (CLLITDVALEHLENCRGLERLELYD), and 376–401 (CQQVTRAGIKRMRAQLPHVKVHAYFA). The interaction with Calmodulin stretch occupies residues 80–90 (LRKLSLRGCIG). Lys-201 is covalently cross-linked (Glycyl lysine isopeptide (Lys-Gly) (interchain with G-Cter in ubiquitin)). Thr-404 is subject to Phosphothreonine. Residue Cys-420 is the site of S-geranylgeranyl cysteine attachment. A CAAX motif motif is present at residues 420 to 423 (CVIL).

As to quaternary structure, part of the SCF (SKP1-CUL1-F-box) E3 ubiquitin-protein ligase complex SCF(FBXL2) composed of CUL1, SKP1, RBX1 and FBXL2. Interacts with calmodulin; may antagonize substrate ubiquitination by SCF(FBXL2). May interact with PIK3R1. Interacts with PTPN13. In terms of assembly, (Microbial infection) Interacts with hepatitis C virus non-structural protein 5A (NS5A) and less efficiently, with hepatitis C virus non-structural protein 5B (NS5B); a reaction crucial for hepatitis C virus RNA replication. Phosphorylated by GSK-beta (GSK3B), promoting recognition by FBXO3, leading to its ubiquitination by the SCF(FBXO3) complex. In terms of processing, ubiquitinated at Lys-201 by the SCF(FBXO3) complex in response to lipopolysaccharide (LPS), leading to its degradation by the proteasome. Expressed in brain, heart, kidney, liver, lung, pancreas and placenta.

The protein localises to the membrane. It functions in the pathway protein modification; protein ubiquitination. In terms of biological role, calcium-activated substrate recognition component of the SCF (SKP1-cullin-F-box protein) E3 ubiquitin-protein ligase complex, SCF(FBXL2), which mediates the ubiquitination and subsequent proteasomal degradation of target proteins. Unlike many F-box proteins, FBXL2 does not seem to target phosphodegron within its substrates but rather calmodulin-binding motifs and is thereby antagonized by calmodulin. This is the case for the cyclins CCND2 and CCND3 which polyubiquitination and subsequent degradation are inhibited by calmodulin. Through CCND2 and CCND3 degradation induces cell-cycle arrest in G(0). SCF(FBXL2) also mediates PIK3R2 ubiquitination and proteasomal degradation thereby regulating phosphatidylinositol 3-kinase signaling and autophagy. PCYT1A monoubiquitination by SCF(FBXL2) and subsequent degradation regulates synthesis of phosphatidylcholine, which is utilized for formation of membranes and of pulmonary surfactant. The SCF(FBXL2) complex acts as a regulator of inflammation by mediating ubiquitination and degradation of TRAF proteins (TRAF1, TRAF2, TRAF3, TRAF4, TRAF5 and TRAF6). The SCF(FBXL2) complex acts as a negative regulator of the NLRP3 inflammasome by mediating ubiquitination and degradation of NLRP3. This chain is F-box/LRR-repeat protein 2, found in Homo sapiens (Human).